The following is a 611-amino-acid chain: Chaperone protein DnaK (611 aa).

Thr-173 carries the post-translational modification Phosphothreonine; by autocatalysis. The span at 577-592 (QAAAGQAEGAQGAQDA) shows a compositional bias: low complexity. Residues 577–611 (QAAAGQAEGAQGAQDAGTKKDNVVDAEFEEVKEDK) are disordered. A compositionally biased stretch (acidic residues) spans 600 to 611 (VDAEFEEVKEDK).

It belongs to the heat shock protein 70 family.

In terms of biological role, acts as a chaperone. In Bacillus cereus (strain G9842), this protein is Chaperone protein DnaK.